The following is an 841-amino-acid chain: Envelope glycoprotein H (841 aa).

Residues 1–17 (MFALVLAVVILPLWTTA) form the signal peptide. N-linked (GlcNAc...) asparagine; by host glycans are attached at residues Asn-18, Asn-45, and Asn-217. Over 18 to 802 (NKSYVTPTPA…ERRQAIRMSG (785 aa)) the chain is Virion surface. The interaction with gL stretch occupies residues 246 to 309 (DSGRVEVNIG…DPGPSYRVYL (64 aa)). N-linked (GlcNAc...) asparagine; by host glycans are attached at residues Asn-317, Asn-499, Asn-522, Asn-760, and Asn-783. A helical membrane pass occupies residues 803-823 (QYLGASLGGAFLAVVGFGIIG). Topologically, residues 824-841 (WMLCGNSRLREYNKIPLT) are intravirion.

This sequence belongs to the herpesviridae glycoprotein H family. Interacts with glycoprotein L (gL); this interaction is necessary for the correct processing and cell surface expression of gH. The heterodimer gH/gL seems to interact with gB trimers during fusion. In terms of processing, N-glycosylated, O-glycosylated, and sialylated.

It is found in the virion membrane. It localises to the host cell membrane. The protein localises to the host endosome membrane. Functionally, the heterodimer glycoprotein H-glycoprotein L is required for the fusion of viral and plasma membranes leading to virus entry into the host cell. Following initial binding to host receptor, membrane fusion is mediated by the fusion machinery composed of gB and the heterodimer gH/gL. May also be involved in the fusion between the virion envelope and the outer nuclear membrane during virion morphogenesis. This Varicella-zoster virus (strain Oka vaccine) (HHV-3) protein is Envelope glycoprotein H.